The sequence spans 348 residues: Protein pelota homolog (348 aa).

This sequence belongs to the eukaryotic release factor 1 family. Pelota subfamily. As to quaternary structure, monomer. Requires a divalent metal cation as cofactor.

It is found in the cytoplasm. Functionally, may function in recognizing stalled ribosomes, interact with stem-loop structures in stalled mRNA molecules, and effect endonucleolytic cleavage of the mRNA. May play a role in the release non-functional ribosomes and degradation of damaged mRNAs. Has endoribonuclease activity. The protein is Protein pelota homolog of Methanococcus aeolicus (strain ATCC BAA-1280 / DSM 17508 / OCM 812 / Nankai-3).